The following is a 474-amino-acid chain: Ribosomal protein uS12 methylthiotransferase RimO (474 aa).

Residues 37–147 form the MTTase N-terminal domain; the sequence is NRIGFVSLGC…VLNHVHKYVP (111 aa). Positions 46, 82, 111, 179, 183, and 186 each coordinate [4Fe-4S] cluster. A Radical SAM core domain is found at 165–402; that stretch reads LTPKHYAYLK…MEVQAEISAE (238 aa). The TRAM domain occupies 405-471; it reads ARLVGRELDI…EHDLWAELVA (67 aa).

The protein belongs to the methylthiotransferase family. RimO subfamily. [4Fe-4S] cluster serves as cofactor.

It is found in the cytoplasm. It catalyses the reaction L-aspartate(89)-[ribosomal protein uS12]-hydrogen + (sulfur carrier)-SH + AH2 + 2 S-adenosyl-L-methionine = 3-methylsulfanyl-L-aspartate(89)-[ribosomal protein uS12]-hydrogen + (sulfur carrier)-H + 5'-deoxyadenosine + L-methionine + A + S-adenosyl-L-homocysteine + 2 H(+). Its function is as follows. Catalyzes the methylthiolation of an aspartic acid residue of ribosomal protein uS12. This Shewanella amazonensis (strain ATCC BAA-1098 / SB2B) protein is Ribosomal protein uS12 methylthiotransferase RimO.